A 203-amino-acid chain; its full sequence is Small ribosomal subunit protein uS3 (203 aa).

In terms of domain architecture, KH type-2 spans 39 to 113 (IREIIRRNFL…NHVLNAKNIA (75 aa)).

This sequence belongs to the universal ribosomal protein uS3 family. As to quaternary structure, part of the 30S ribosomal subunit. Forms a tight complex with proteins S10 and S14.

Binds the lower part of the 30S subunit head. Binds mRNA in the 70S ribosome, positioning it for translation. This is Small ribosomal subunit protein uS3 from Carsonella ruddii.